The sequence spans 132 residues: Large ribosomal subunit protein bL19 (132 aa).

It belongs to the bacterial ribosomal protein bL19 family.

Functionally, this protein is located at the 30S-50S ribosomal subunit interface and may play a role in the structure and function of the aminoacyl-tRNA binding site. This chain is Large ribosomal subunit protein bL19, found in Nitrosomonas europaea (strain ATCC 19718 / CIP 103999 / KCTC 2705 / NBRC 14298).